Reading from the N-terminus, the 336-residue chain is Glycerol-3-phosphate dehydrogenase [NAD(P)+] (336 aa).

Positions 14, 15, 35, 36, and 109 each coordinate NADPH. The sn-glycerol 3-phosphate site is built by Lys-109 and Gly-139. An NADPH-binding site is contributed by Ala-143. Residues Lys-194, Asp-247, Ser-257, Arg-258, and Asn-259 each contribute to the sn-glycerol 3-phosphate site. Lys-194 serves as the catalytic Proton acceptor. Arg-258 is a binding site for NADPH. Position 284 (Glu-284) interacts with NADPH.

This sequence belongs to the NAD-dependent glycerol-3-phosphate dehydrogenase family.

The protein localises to the cytoplasm. The enzyme catalyses sn-glycerol 3-phosphate + NAD(+) = dihydroxyacetone phosphate + NADH + H(+). It carries out the reaction sn-glycerol 3-phosphate + NADP(+) = dihydroxyacetone phosphate + NADPH + H(+). It functions in the pathway membrane lipid metabolism; glycerophospholipid metabolism. In terms of biological role, catalyzes the reduction of the glycolytic intermediate dihydroxyacetone phosphate (DHAP) to sn-glycerol 3-phosphate (G3P), the key precursor for phospholipid synthesis. The chain is Glycerol-3-phosphate dehydrogenase [NAD(P)+] from Streptomyces coelicolor (strain ATCC BAA-471 / A3(2) / M145).